Here is a 183-residue protein sequence, read N- to C-terminus: Translation initiation factor IF-3 (183 aa).

The segment covering Met1–Lys13 has biased composition (polar residues). The disordered stretch occupies residues Met1 to Arg24.

Belongs to the IF-3 family. Monomer.

Its subcellular location is the cytoplasm. Functionally, IF-3 binds to the 30S ribosomal subunit and shifts the equilibrium between 70S ribosomes and their 50S and 30S subunits in favor of the free subunits, thus enhancing the availability of 30S subunits on which protein synthesis initiation begins. This chain is Translation initiation factor IF-3, found in Acinetobacter baylyi (strain ATCC 33305 / BD413 / ADP1).